Consider the following 220-residue polypeptide: Phosphatidylserine decarboxylase proenzyme (220 aa).

Residue S189 is the Schiff-base intermediate with substrate; via pyruvic acid of the active site. A Pyruvic acid (Ser); by autocatalysis modification is found at S189.

The protein belongs to the phosphatidylserine decarboxylase family. PSD-A subfamily. In terms of assembly, heterodimer of a large membrane-associated beta subunit and a small pyruvoyl-containing alpha subunit. It depends on pyruvate as a cofactor. In terms of processing, is synthesized initially as an inactive proenzyme. Formation of the active enzyme involves a self-maturation process in which the active site pyruvoyl group is generated from an internal serine residue via an autocatalytic post-translational modification. Two non-identical subunits are generated from the proenzyme in this reaction, and the pyruvate is formed at the N-terminus of the alpha chain, which is derived from the carboxyl end of the proenzyme. The post-translation cleavage follows an unusual pathway, termed non-hydrolytic serinolysis, in which the side chain hydroxyl group of the serine supplies its oxygen atom to form the C-terminus of the beta chain, while the remainder of the serine residue undergoes an oxidative deamination to produce ammonia and the pyruvoyl prosthetic group on the alpha chain.

Its subcellular location is the cell membrane. It catalyses the reaction a 1,2-diacyl-sn-glycero-3-phospho-L-serine + H(+) = a 1,2-diacyl-sn-glycero-3-phosphoethanolamine + CO2. It participates in phospholipid metabolism; phosphatidylethanolamine biosynthesis; phosphatidylethanolamine from CDP-diacylglycerol: step 2/2. Its function is as follows. Catalyzes the formation of phosphatidylethanolamine (PtdEtn) from phosphatidylserine (PtdSer). The protein is Phosphatidylserine decarboxylase proenzyme of Pelobacter propionicus (strain DSM 2379 / NBRC 103807 / OttBd1).